The following is a 127-amino-acid chain: Small ribosomal subunit protein uS12 (127 aa).

Position 89 is a 3-methylthioaspartic acid (Asp89). The tract at residues 104-127 (TQGVKDRKQARSKYGTKRAKAGKK) is disordered. Residues 113-127 (ARSKYGTKRAKAGKK) show a composition bias toward basic residues.

This sequence belongs to the universal ribosomal protein uS12 family. In terms of assembly, part of the 30S ribosomal subunit. Contacts proteins S8 and S17. May interact with IF1 in the 30S initiation complex.

Its function is as follows. With S4 and S5 plays an important role in translational accuracy. Functionally, interacts with and stabilizes bases of the 16S rRNA that are involved in tRNA selection in the A site and with the mRNA backbone. Located at the interface of the 30S and 50S subunits, it traverses the body of the 30S subunit contacting proteins on the other side and probably holding the rRNA structure together. The combined cluster of proteins S8, S12 and S17 appears to hold together the shoulder and platform of the 30S subunit. This chain is Small ribosomal subunit protein uS12, found in Herminiimonas arsenicoxydans.